Reading from the N-terminus, the 589-residue chain is Mediator of RNA polymerase II transcription subunit 26 (589 aa).

A TFIIS N-terminal domain is found at 10 to 87 (QMRDRLLQAI…RNWQKLIEPG (78 aa)). 3 disordered regions span residues 83-233 (LIEP…TKLP), 247-320 (ARVD…DGPS), and 363-441 (LETK…PIPE). A compositionally biased stretch (basic and acidic residues) spans 190-213 (LLEKDDEVPSDRIRLEHLDNDRHN). Over residues 259–268 (SPRYSSSPRS) the composition is skewed to low complexity. Residues 276 to 297 (KRSTTYAPKGTLSSPSLNSAQV) show a composition bias toward polar residues. Composition is skewed to basic and acidic residues over residues 398–412 (SEDR…RRLT) and 424–435 (TPKESHQEEECH).

This sequence belongs to the Mediator complex subunit 26 family. As to quaternary structure, component of the Mediator complex.

The protein resides in the nucleus. In terms of biological role, component of the Mediator complex, a coactivator involved in the regulated transcription of nearly all RNA polymerase II-dependent genes. Mediator functions as a bridge to convey information from gene-specific regulatory proteins to the basal RNA polymerase II transcription machinery. Mediator is recruited to promoters by direct interactions with regulatory proteins and serves as a scaffold for the assembly of a functional preinitiation complex with RNA polymerase II and the general transcription factors. This is Mediator of RNA polymerase II transcription subunit 26 (med26) from Danio rerio (Zebrafish).